The primary structure comprises 358 residues: Peptide chain release factor 1 (358 aa).

Glutamine 235 is subject to N5-methylglutamine.

It belongs to the prokaryotic/mitochondrial release factor family. Post-translationally, methylated by PrmC. Methylation increases the termination efficiency of RF1.

Its subcellular location is the cytoplasm. Its function is as follows. Peptide chain release factor 1 directs the termination of translation in response to the peptide chain termination codons UAG and UAA. The polypeptide is Peptide chain release factor 1 (Neisseria gonorrhoeae (strain ATCC 700825 / FA 1090)).